The following is a 106-amino-acid chain: Large ribosomal subunit protein uL24 (106 aa).

The protein belongs to the universal ribosomal protein uL24 family. As to quaternary structure, part of the 50S ribosomal subunit.

In terms of biological role, one of two assembly initiator proteins, it binds directly to the 5'-end of the 23S rRNA, where it nucleates assembly of the 50S subunit. Functionally, one of the proteins that surrounds the polypeptide exit tunnel on the outside of the subunit. In Orientia tsutsugamushi (strain Boryong) (Rickettsia tsutsugamushi), this protein is Large ribosomal subunit protein uL24.